A 307-amino-acid polypeptide reads, in one-letter code: MSKHVAVLLGGTSAEREVSLNSGKACADALEGEGYRVTRVDVGPDIASVLTALRPDAAFNALHGPDGEDGTIQGLLEILKIPYTHSGVLASALAMNKERAKTVMRAAGVDVPEGRIVNRREAARTHPLPPPYVVKPIAEGSSVGVIIVRDGRSHPPQILASEEWTFGEQVLAEPYIAGRELTCGVMGDKALGVIEVKAATGDWYDYDAKYAPGGSVHVLPAELKPNVYQRVQELSLTAHQALGCRGVSRADLRYDDTPGGTGLLVVLEVNTQPGMTQTSLVPEMAAHAGLSFGELVRWMVEDASLNR.

Positions 101–301 (KTVMRAAGVD…FGELVRWMVE (201 aa)) constitute an ATP-grasp domain. Position 127–182 (127–182 (PLPPPYVVKPIAEGSSVGVIIVRDGRSHPPQILASEEWTFGEQVLAEPYIAGRELT)) interacts with ATP. Residues Asp251, Glu268, and Asn270 each contribute to the Mg(2+) site.

Belongs to the D-alanine--D-alanine ligase family. It depends on Mg(2+) as a cofactor. Mn(2+) is required as a cofactor.

It is found in the cytoplasm. It carries out the reaction 2 D-alanine + ATP = D-alanyl-D-alanine + ADP + phosphate + H(+). Its pathway is cell wall biogenesis; peptidoglycan biosynthesis. Functionally, cell wall formation. The chain is D-alanine--D-alanine ligase from Methylobacterium radiotolerans (strain ATCC 27329 / DSM 1819 / JCM 2831 / NBRC 15690 / NCIMB 10815 / 0-1).